The sequence spans 271 residues: Tryptophan synthase alpha chain (271 aa).

Catalysis depends on proton acceptor residues Glu56 and Asp67.

The protein belongs to the TrpA family. In terms of assembly, tetramer of two alpha and two beta chains.

The enzyme catalyses (1S,2R)-1-C-(indol-3-yl)glycerol 3-phosphate + L-serine = D-glyceraldehyde 3-phosphate + L-tryptophan + H2O. It participates in amino-acid biosynthesis; L-tryptophan biosynthesis; L-tryptophan from chorismate: step 5/5. The alpha subunit is responsible for the aldol cleavage of indoleglycerol phosphate to indole and glyceraldehyde 3-phosphate. The protein is Tryptophan synthase alpha chain of Mycobacterium avium (strain 104).